The sequence spans 152 residues: SKP1-like protein 10 (152 aa).

Residues 94-152 (IMAANYLNIKSLLDLACQTVADMIKDNTVEHTRKFFNIENDYTHEEEEAVRRENQWGFE) are interaction with the F-box domain of F-box proteins.

This sequence belongs to the SKP1 family. In terms of assembly, part of a SCF (SKP1-cullin-F-box) protein ligase complex. Interacts with CPR1/CPR30. Expressed in young seedlings, roots, leaves, floral stems, inflorescences, and siliques.

It localises to the nucleus. It participates in protein modification; protein ubiquitination. Involved in ubiquitination and subsequent proteasomal degradation of target proteins. Together with CUL1, RBX1 and a F-box protein, it forms a SCF E3 ubiquitin ligase complex. The functional specificity of this complex depends on the type of F-box protein. In the SCF complex, it serves as an adapter that links the F-box protein to CUL1. This is SKP1-like protein 10 (ASK10) from Arabidopsis thaliana (Mouse-ear cress).